Consider the following 808-residue polypeptide: Receptor like protein 27 (808 aa).

The signal sequence occupies residues 1–31 (MLFFIKVFMKTILSVLLLFFIFASSFTLVVG). The Extracellular portion of the chain corresponds to 32–740 (LAGCRPDQIQ…DEDEEVLNWK (709 aa)). Residues Asn56, Asn68, Asn90, Asn103, Asn108, Asn144, and Asn167 are each glycosylated (N-linked (GlcNAc...) asparagine). LRR repeat units follow at residues 96-120 (LQHL…GFGN), 122-144 (NRLE…SFSN), 145-170 (LSQL…NLTK), 172-192 (SILV…LLTL), 193-218 (PFLS…STSS), 220-241 (LEFM…ISKL), 242-265 (INLK…LFSS), 266-291 (FKSL…SKIP), 293-314 (NLEN…LKNL), 315-338 (TKLE…FWNL), 340-363 (RLRR…VLVN), and 364-387 (SSVR…PLSI). Residue Asn213 is glycosylated (N-linked (GlcNAc...) asparagine). The N-linked (GlcNAc...) asparagine glycan is linked to Asn313. N-linked (GlcNAc...) asparagine glycosylation occurs at Asn363. The LRR 13; degenerate repeat unit spans residues 388 to 407 (NLLSAWNNSFTGNIPLETCN). 3 N-linked (GlcNAc...) asparagine glycosylation sites follow: Asn394, Asn407, and Asn420. LRR repeat units follow at residues 408 to 434 (RSSL…DFQE), 436 to 456 (LIVV…IFSD), 457 to 481 (GALL…LLNC), 483 to 504 (MLRF…WLKA), 505 to 529 (LPDL…DRGP), 532 to 556 (FPKL…YFVN), 601 to 625 (LTSY…IGLL), 626 to 649 (KALI…LANV), 650 to 673 (TELE…LKTL), and 675 to 698 (FLAY…QITG). Asn480 carries N-linked (GlcNAc...) asparagine glycosylation. Asn544 carries N-linked (GlcNAc...) asparagine glycosylation. N-linked (GlcNAc...) asparagine glycans are attached at residues Asn632 and Asn648. Residues 741–761 (AVVIGYWPGLLLGLIMAHVIA) form a helical membrane-spanning segment. Topologically, residues 762-808 (SFKPKWLVKIVGPEKRKEDNPVRLFMTLDSRWDSFNNKKNVEQKSDM) are cytoplasmic.

The protein belongs to the RLP family.

It localises to the cell membrane. The polypeptide is Receptor like protein 27 (Arabidopsis thaliana (Mouse-ear cress)).